Consider the following 361-residue polypeptide: G2/mitotic-specific cyclin-B1 (361 aa).

Residues M1–N13 show a composition bias toward polar residues. The tract at residues M1–N33 is disordered.

Belongs to the cyclin family. Cyclin AB subfamily. Interacts with the CDK1 protein kinase to form a serine/threonine kinase holoenzyme complex also known as maturation promoting factor (MPF). The cyclin subunit imparts substrate specificity to the complex. Interacts with E3 ubiquitin-protein ligase etc-1. In terms of processing, ubiquitinated by etc-1 likely during meiosis, resulting in its degradation.

It localises to the cytoplasm. In terms of biological role, essential for the control of the cell cycle at the G2/M (mitosis) transition. This Caenorhabditis elegans protein is G2/mitotic-specific cyclin-B1 (cyb-1).